A 303-amino-acid polypeptide reads, in one-letter code: N-acetyl-D-glucosamine kinase (303 aa).

ATP-binding positions include 4 to 11 (GFDVGGTK) and 133 to 140 (GFGGGLIY). Residues H157, C177, C179, and C184 each contribute to the Zn(2+) site.

Belongs to the ROK (NagC/XylR) family. NagK subfamily.

It catalyses the reaction N-acetyl-D-glucosamine + ATP = N-acetyl-D-glucosamine 6-phosphate + ADP + H(+). Its pathway is cell wall biogenesis; peptidoglycan recycling. Its function is as follows. Catalyzes the phosphorylation of N-acetyl-D-glucosamine (GlcNAc) derived from cell-wall degradation, yielding GlcNAc-6-P. This is N-acetyl-D-glucosamine kinase from Vibrio vulnificus (strain CMCP6).